The sequence spans 275 residues: Beta-lactamase OXA-3 (275 aa).

Positions 1-21 (MAIRIFAILFSTFVFGTFAHA) are cleaved as a signal peptide. The Acyl-ester intermediate role is filled by Ser72. An N6-carboxylysine modification is found at Lys75. 210 to 212 (KTG) is a binding site for substrate.

This sequence belongs to the class-D beta-lactamase family.

The enzyme catalyses a beta-lactam + H2O = a substituted beta-amino acid. Its function is as follows. This is an oxacillin-hydrolyzing beta-lactamase. In Pseudomonas aeruginosa, this protein is Beta-lactamase OXA-3 (bla).